Consider the following 367-residue polypeptide: Protein pxr1 (367 aa).

Disordered stretches follow at residues 1 to 28 and 156 to 336; these read MGLS…TDSF and KALK…PMGI. Positions 15-27 are enriched in polar residues; that stretch reads DPNNTKWSGNTDS. In terms of domain architecture, G-patch spans 25–79; that stretch reads TDSFGHRMMKSQGWTPGEYLGAKDAAHAEFHTAANASHIRVVIKDNNLGLGAKIG. Residues 167-182 show a composition bias toward acidic residues; sequence SSDDSDSSSDEEEEEK. Basic residues-rich tracts occupy residues 209 to 221, 236 to 248, and 265 to 277; these read SKKS…SKKR, KSKK…KSKS, and KARK…KKRR. The span at 282-296 shows a compositional bias: low complexity; the sequence is ATAGADTEETSSTSK. The segment covering 297 to 309 has biased composition (basic residues); that stretch reads SSKKNSKKDKHKS. The segment covering 310-328 has biased composition (low complexity); it reads SSASESSTKESTPTVTESS.

It belongs to the PINX1 family.

The protein localises to the nucleus. It is found in the nucleolus. Its function is as follows. Involved in rRNA-processing at A0, A1 and A2 sites and negatively regulates telomerase. The protein is Protein pxr1 (pxr1) of Sclerotinia sclerotiorum (strain ATCC 18683 / 1980 / Ss-1) (White mold).